Consider the following 283-residue polypeptide: MDAIKKKMQAMKLEKDNALDRALLCEQQARDANLRAEKAEEEARALQKKIQTIENDLDQTQESLGQVMAKLEEKEKALQNAESEVAALNRRIQLLEEDLERSEERLATATAKLAEASQAADESERARKILENRSLADEERMDALENQLKEARFLAEEADKKYDEVARKLAMVEADLERAEERAEAGESKIVELEEELRVVGNNLKSLEVSEEKANQREEEISNRLRTLTTRLKEAEARAEFAERSVQKLQKEVDRLEDELVIEKEKYKIIGDDLDSAFVELIL.

A coiled-coil region spans residues 1–283 (MDAIKKKMQA…LDSAFVELIL (283 aa)).

The protein belongs to the tropomyosin family. In terms of assembly, homodimer.

Tropomyosin, in association with the troponin complex, plays a central role in the calcium dependent regulation of muscle contraction. The protein is Tropomyosin of Locusta migratoria (Migratory locust).